The following is a 60-amino-acid chain: Toxin 4.9.6 (60 aa).

4 disulfide bridges follow: Cys3–Cys22, Cys17–Cys38, Cys40–Cys52, and Cys53–Cys58.

The protein belongs to the three-finger toxin family. Short-chain subfamily. Orphan group XI sub-subfamily. Expressed by the venom gland.

Its subcellular location is the secreted. This is Toxin 4.9.6 from Dendroaspis viridis (Western green mamba).